A 151-amino-acid polypeptide reads, in one-letter code: Tetratricopeptide repeat protein 32 (151 aa).

3 TPR repeats span residues 8-41 (SHAT…CACA), 58-91 (ATAY…QPNF), and 92-125 (EVPY…NPGF).

The protein is Tetratricopeptide repeat protein 32 (TTC32) of Homo sapiens (Human).